A 389-amino-acid polypeptide reads, in one-letter code: Cuticlin-3 (389 aa).

An N-terminal signal peptide occupies residues 1–19; sequence MARYSLGLGLCLLVASVSA. The Extracellular segment spans residues 20-354; the sequence is IPVDNNVEGE…ELCISSFHIS (335 aa). In terms of domain architecture, ZP spans 33–278; the sequence is ECGPTSITVN…PTCSEPQGFG (246 aa). N-linked (GlcNAc...) asparagine glycosylation occurs at asparagine 284. The chain crosses the membrane as a helical span at residues 355–375; it reads VVTVFLGLTVFVAIFITYMIV. Over 376–389 the chain is Cytoplasmic; sequence SRMMVPSDKMQSAC.

It localises to the cell membrane. Plays a role in alae formation in L1 larvae. This chain is Cuticlin-3, found in Caenorhabditis elegans.